We begin with the raw amino-acid sequence, 207 residues long: Proteasome subunit beta 2 (207 aa).

The propeptide at methionine 1–glycine 10 is removed in mature form; by autocatalysis. Threonine 11 functions as the Nucleophile in the catalytic mechanism.

Belongs to the peptidase T1B family. As to quaternary structure, the 20S proteasome core is composed of 14 alpha and 14 beta subunits that assemble into four stacked heptameric rings, resulting in a barrel-shaped structure. The two inner rings, each composed of seven catalytic beta subunits, are sandwiched by two outer rings, each composed of seven alpha subunits. The catalytic chamber with the active sites is on the inside of the barrel. Has a gated structure, the ends of the cylinder being occluded by the N-termini of the alpha-subunits. Is capped at one or both ends by the proteasome regulatory ATPase, PAN.

The protein resides in the cytoplasm. It carries out the reaction Cleavage of peptide bonds with very broad specificity.. Its activity is regulated as follows. The formation of the proteasomal ATPase PAN-20S proteasome complex, via the docking of the C-termini of PAN into the intersubunit pockets in the alpha-rings, triggers opening of the gate for substrate entry. Interconversion between the open-gate and close-gate conformations leads to a dynamic regulation of the 20S proteasome proteolysis activity. Component of the proteasome core, a large protease complex with broad specificity involved in protein degradation. The polypeptide is Proteasome subunit beta 2 (Pyrococcus abyssi (strain GE5 / Orsay)).